Reading from the N-terminus, the 253-residue chain is Putative enoyl-CoA hydratase (253 aa).

The active site involves Glu-131.

Belongs to the enoyl-CoA hydratase/isomerase family. Homohexamer; dimer of trimers.

It carries out the reaction a (3S)-3-hydroxyacyl-CoA = a (2E)-enoyl-CoA + H2O. The sequence is that of Putative enoyl-CoA hydratase from Thermus thermophilus (strain ATCC 27634 / DSM 579 / HB8).